The following is a 576-amino-acid chain: uncharacterized protein (576 aa).

It belongs to the FadG family.

This is an uncharacterized protein from Bacillus subtilis (strain 168).